The chain runs to 214 residues: ATP-dependent Clp protease proteolytic subunit (214 aa).

Catalysis depends on serine 114, which acts as the Nucleophile. The active site involves histidine 139.

This sequence belongs to the peptidase S14 family. In terms of assembly, fourteen ClpP subunits assemble into 2 heptameric rings which stack back to back to give a disk-like structure with a central cavity, resembling the structure of eukaryotic proteasomes.

It is found in the cytoplasm. The catalysed reaction is Hydrolysis of proteins to small peptides in the presence of ATP and magnesium. alpha-casein is the usual test substrate. In the absence of ATP, only oligopeptides shorter than five residues are hydrolyzed (such as succinyl-Leu-Tyr-|-NHMec, and Leu-Tyr-Leu-|-Tyr-Trp, in which cleavage of the -Tyr-|-Leu- and -Tyr-|-Trp bonds also occurs).. Cleaves peptides in various proteins in a process that requires ATP hydrolysis. Has a chymotrypsin-like activity. Plays a major role in the degradation of misfolded proteins. The sequence is that of ATP-dependent Clp protease proteolytic subunit from Nitrosomonas eutropha (strain DSM 101675 / C91 / Nm57).